The following is a 217-amino-acid chain: HTH-type transcriptional regulator EthR (217 aa).

The tract at residues 1–22 (MTTASQTRTPRGRRSARPSGDD) is disordered. An HTH tetR-type domain is found at 21-81 (DDREAAILAT…SLIDPLIKRA (61 aa)). The H-T-H motif DNA-binding region spans 44–63 (SVDDLAKGAGISRPTFYFYF).

In terms of assembly, homodimer.

In terms of biological role, involved in the repression of teh monooxygenase EthA which is responsible of the formation of the active metabolite of ethionamide (ETH). The sequence is that of HTH-type transcriptional regulator EthR (ethR) from Mycolicibacterium smegmatis (strain ATCC 700084 / mc(2)155) (Mycobacterium smegmatis).